A 213-amino-acid chain; its full sequence is C-type lectin domain family 4 member C (213 aa).

At 1 to 21 (MVPEEEPQDREKGLWWFQLKV) the chain is on the cytoplasmic side. Residues 22 to 44 (WSMAVVSILLLSVCFTVSSVVPH) form a helical; Signal-anchor for type II membrane protein membrane-spanning segment. The Extracellular segment spans residues 45-213 (NFMYSKTVKR…SICKMKKIYI (169 aa)). Intrachain disulfides connect Cys70–Cys82 and Cys83–Cys94. In terms of domain architecture, C-type lectin spans 90–207 (FQSSCYFIST…CHVPQKSICK (118 aa)). Asn110 and Asn137 each carry an N-linked (GlcNAc...) asparagine glycan. Cystine bridges form between Cys111-Cys206 and Cys180-Cys198. Residue Ser139 coordinates a carbohydrate. A glycan (N-linked (GlcNAc...) asparagine) is linked at Asn164. Ca(2+) contacts are provided by Glu172, Asn174, and Glu178. Residues Glu178, 184–186 (NFR), Asn194, 194–195 (ND), and Gln202 each bind a carbohydrate. 2 residues coordinate Ca(2+): Asn194 and Asp195.

In terms of assembly, homodimer. Expressed in plasmacytoid dendritic cells (PDCs). Constitutively expressed in immature monocyte-derived dendritic cells (iMDDC) and is significantly down-regulated upon maturation with LPS but not with TNF-alpha.

It is found in the cell membrane. In terms of biological role, lectin-type cell surface receptor which may play a role in antigen capturing by dendritic cells. Specifically recognizes non-sialylated galactose-terminated biantennary glycans containing the trisaccharide epitope Gal(beta1-3/4)GlcNAc(beta1-2)Man. Binds to serum IgG. Efficiently targets ligand into antigen-processing and peptide-loading compartments for presentation to T-cells. May mediate potent inhibition of induction of IFN-alpha/beta expression in plasmacytoid dendritic cells. May act as a signaling receptor that activates protein-tyrosine kinases and mobilizes intracellular calcium. This chain is C-type lectin domain family 4 member C (CLEC4C), found in Homo sapiens (Human).